The following is a 532-amino-acid chain: Putative cysteine ligase BshC (532 aa).

Residues 431–451 (MAQAKDALAKVDASLVEAAER) are a coiled coil.

It belongs to the BshC family.

This chain is Putative cysteine ligase BshC, found in Koribacter versatilis (strain Ellin345).